The chain runs to 270 residues: Cbp/p300-interacting transactivator 2 (270 aa).

The segment at 138–201 (LHPAAGHQMN…SGGGSGSGNM (64 aa)) is disordered. The segment covering 165–198 (STPGGSGGSSTPGGSGSSSGGGAGSSNSGGGSGS) has biased composition (gly residues).

It belongs to the CITED family. In terms of assembly, interacts (via C-terminus) with SMAD2. Interacts (via C-terminus) with SMAD3 (via MH2 domain). Interacts with LHX2 (via LIM domains). Interacts with WT1. Interacts (via C-terminus) with EP300 (via CH1 domain); the interaction is stimulated in response to hypoxia. Interacts with PPARA. Interacts (via C-terminus) with TFAP2A, TFAP2B and TFAP2C.

It localises to the nucleus. Its function is as follows. Transcriptional coactivator of the p300/CBP-mediated transcription complex. Acts as a bridge, linking TFAP2 transcription factors and the p300/CBP transcriptional coactivator complex in order to stimulate TFAP2-mediated transcriptional activation. Positively regulates TGF-beta signaling through its association with the SMAD/p300/CBP-mediated transcriptional coactivator complex. Stimulates the peroxisome proliferator-activated receptors PPARA transcriptional activity. Enhances estrogen-dependent transactivation mediated by estrogen receptors. Also acts as a transcriptional corepressor; interferes with the binding of the transcription factors HIF1A or STAT2 and the p300/CBP transcriptional coactivator complex. Participates in sex determination and early gonad development by stimulating transcription activation of SRY. Plays a role in controlling left-right patterning during embryogenesis; potentiates transcriptional activation of NODAL-mediated gene transcription in the left lateral plate mesoderm (LPM). Plays an essential role in differentiation of the adrenal cortex from the adrenogonadal primordium (AGP); stimulates WT1-mediated transcription activation thereby up-regulating the nuclear hormone receptor NR5A1 promoter activity. Associates with chromatin to the PITX2 P1 promoter region. The polypeptide is Cbp/p300-interacting transactivator 2 (CITED2) (Homo sapiens (Human)).